A 157-amino-acid polypeptide reads, in one-letter code: Probable succinate transporter subunit YjjB (157 aa).

Helical transmembrane passes span 8–28 (FALAQDMILAAIPAVGFAMVF), 57–77 (LNIEWSTFMASMLVGTIGIQW), 87–107 (VFTVAAVIPMFPGISAYTAMI), and 129–149 (FLTASSIVGALSIGLSIPGLW).

Belongs to the ThrE exporter (TC 2.A.79) family. In terms of assembly, the transporter is composed of YjjB and YjjP.

Its subcellular location is the cell inner membrane. Its function is as follows. Involved in succinate export with YjjP. Both proteins are required for export. The protein is Probable succinate transporter subunit YjjB of Shigella boydii serotype 4 (strain Sb227).